Here is a 1449-residue protein sequence, read N- to C-terminus: Spike glycoprotein (1449 aa).

The signal sequence occupies residues 1–28 (MKKLFVVLVVMPLIYGDNFPCSKLTNRT). S1 stretches follow at residues 17 to 776 (DNFP…FYYY) and 29 to 776 (IGNH…FYYY). Topologically, residues 29-1390 (IGNHWNLIET…NRIETYVKWP (1362 aa)) are virion surface. The interval 657-801 (VIYEEGDNIV…DSNDVDCEPV (145 aa)) is interaction with host ANPEP. The tract at residues 777–1449 (SIYNYTNDRT…YEPIEKVHVH (673 aa)) is S2. The tract at residues 1022-1043 (AGGITLGALGGGAVAIPFAVAV) is fusion peptide. The heptad repeat 1 (HR1) stretch occupies residues 1037–1156 (IPFAVAVQAR…QVDRLITGRL (120 aa)). Coiled coils occupy residues 1104–1148 (QDVV…DAQV) and 1338–1380 (TYLN…LEWL). The interval 1305 to 1402 (PDYIDINQTV…VWLLIGLVVI (98 aa)) is heptad repeat 2 (HR2). The helical transmembrane segment at 1391–1410 (WYVWLLIGLVVIFCIPLLLF) threads the bilayer. The Intravirion segment spans residues 1411–1449 (CCCSTGCCGCIGCLGSCCHSICSRRQFENYEPIEKVHVH). The KxHxx motif lies at 1445–1449 (KVHVH).

The protein belongs to the alphacoronaviruses spike protein family. As to quaternary structure, homotrimer. During virus morphogenesis, found in a complex with M and HE proteins. Interacts with host ANPEP.

Its subcellular location is the virion membrane. The protein resides in the host endoplasmic reticulum-Golgi intermediate compartment membrane. Functionally, S1 region attaches the virion to the cell membrane by interacting with host ANPEP/aminopeptidase N, initiating the infection. Binding to the receptor probably induces conformational changes in the S glycoprotein unmasking the fusion peptide of S2 region and activating membranes fusion. S2 region belongs to the class I viral fusion protein. Under the current model, the protein has at least 3 conformational states: pre-fusion native state, pre-hairpin intermediate state, and post-fusion hairpin state. During viral and target cell membrane fusion, the coiled coil regions (heptad repeats) regions assume a trimer-of-hairpins structure, positioning the fusion peptide in close proximity to the C-terminal region of the ectodomain. The formation of this structure appears to drive apposition and subsequent fusion of viral and target cell membranes. This chain is Spike glycoprotein, found in Porcine transmissible gastroenteritis coronavirus (strain Miller) (TGEV).